The primary structure comprises 631 residues: Golgin subfamily A member 8A (631 aa).

Residues 1–20 (MLPVDGEERKSEGSDTEGDR) show a composition bias toward basic and acidic residues. 4 disordered regions span residues 1 to 103 (MLPV…QEQA), 127 to 154 (KKQVEHQLEEEKKANNEKQKAERELEGQ), 426 to 447 (TSAEKEPEAAVPASGTGGESSG), and 488 to 520 (PGDSAKDASPGGGHHQAGPGQGGEEGEAAGAAG). The segment covering 78–92 (SLYLSPKSSSASSSL) has biased composition (low complexity). Residues 93 to 103 (HARQSPCQEQA) are compositionally biased toward polar residues. A coiled-coil region spans residues 110-468 (SIKISRLNDT…REHVEKLELG (359 aa)). Residues 128 to 152 (KQVEHQLEEEKKANNEKQKAERELE) are compositionally biased toward basic and acidic residues. Over residues 497-510 (PGGGHHQAGPGQGG) the composition is skewed to gly residues. The golgi-targeting domain stretch occupies residues 519-631 (AGDGVAACGS…CWAWLPRRRR (113 aa)).

The protein belongs to the GOLGA8 family.

It is found in the golgi apparatus. The protein resides in the golgi stack membrane. Its function is as follows. May be involved in maintaining Golgi structure. The sequence is that of Golgin subfamily A member 8A (GOLGA8A) from Homo sapiens (Human).